We begin with the raw amino-acid sequence, 284 residues long: Diaminopimelate epimerase (284 aa).

Substrate contacts are provided by asparagine 14 and asparagine 67. The Proton donor role is filled by cysteine 76. Residues 77 to 78 (GN), asparagine 166, asparagine 199, and 217 to 218 (ER) each bind substrate. The active-site Proton acceptor is cysteine 226. Residue 227–228 (GT) coordinates substrate.

Belongs to the diaminopimelate epimerase family. As to quaternary structure, homodimer.

It is found in the cytoplasm. The enzyme catalyses (2S,6S)-2,6-diaminopimelate = meso-2,6-diaminopimelate. The protein operates within amino-acid biosynthesis; L-lysine biosynthesis via DAP pathway; DL-2,6-diaminopimelate from LL-2,6-diaminopimelate: step 1/1. Functionally, catalyzes the stereoinversion of LL-2,6-diaminopimelate (L,L-DAP) to meso-diaminopimelate (meso-DAP), a precursor of L-lysine and an essential component of the bacterial peptidoglycan. This is Diaminopimelate epimerase from Bacillus subtilis (strain 168).